The sequence spans 375 residues: Queuine tRNA-ribosyltransferase (375 aa).

Asp89 serves as the catalytic Proton acceptor. Substrate contacts are provided by residues Asp89–Phe93, Asp143, Gln187, and Gly214. Residues Gly245–Asp251 form an RNA binding region. The active-site Nucleophile is the Asp264. The interval Thr269–Arg273 is RNA binding; important for wobble base 34 recognition. Positions 302, 304, 307, and 333 each coordinate Zn(2+).

Belongs to the queuine tRNA-ribosyltransferase family. In terms of assembly, homodimer. Within each dimer, one monomer is responsible for RNA recognition and catalysis, while the other monomer binds to the replacement base PreQ1. Zn(2+) is required as a cofactor.

The catalysed reaction is 7-aminomethyl-7-carbaguanine + guanosine(34) in tRNA = 7-aminomethyl-7-carbaguanosine(34) in tRNA + guanine. It functions in the pathway tRNA modification; tRNA-queuosine biosynthesis. Functionally, catalyzes the base-exchange of a guanine (G) residue with the queuine precursor 7-aminomethyl-7-deazaguanine (PreQ1) at position 34 (anticodon wobble position) in tRNAs with GU(N) anticodons (tRNA-Asp, -Asn, -His and -Tyr). Catalysis occurs through a double-displacement mechanism. The nucleophile active site attacks the C1' of nucleotide 34 to detach the guanine base from the RNA, forming a covalent enzyme-RNA intermediate. The proton acceptor active site deprotonates the incoming PreQ1, allowing a nucleophilic attack on the C1' of the ribose to form the product. After dissociation, two additional enzymatic reactions on the tRNA convert PreQ1 to queuine (Q), resulting in the hypermodified nucleoside queuosine (7-(((4,5-cis-dihydroxy-2-cyclopenten-1-yl)amino)methyl)-7-deazaguanosine). This is Queuine tRNA-ribosyltransferase from Salmonella paratyphi A (strain ATCC 9150 / SARB42).